We begin with the raw amino-acid sequence, 450 residues long: MSRRYFGTDGIRGRANGLITPELALKVGQAAGLAFQRGEHRHRVVIGKDTRLSGYMIENALVAGFTSVGMDVLLVGPMPTPAVAMLTKSMRADLGVMISASHNLFEDNGIKLFGPLGYKLSDDVEKQIELMLDESLDKKLAQSASLGRARRIDGVHDRYIEFAKRTLPRELSLEGLRVVIDCANGAAYKVVPEALWELGADVISIGVEPDGFNINKECGSTAPQALCAKVREMRADIGIALDGDADRVILVDERGHVVDGDQLLAVIGQSWKEDGRLAKPGVVATVMSNLGLERFLAGEGIALLRTPVGDRYVLEQMLKDGYNVGGESSGHIILSDFNTTGDGFVAALQVLAMVQKLGRPVSEVCRRFDPLPQILKNVRYRSGRPLDDSGVISAIQDGEKRLNGHGRLLIRPSGTEPVIRVMGEGDDRDVVEEVVDSIVDALGNAAAAAA.

The active-site Phosphoserine intermediate is serine 101. Residues serine 101, aspartate 242, aspartate 244, and aspartate 246 each coordinate Mg(2+). Serine 101 bears the Phosphoserine mark.

The protein belongs to the phosphohexose mutase family. Requires Mg(2+) as cofactor. Activated by phosphorylation.

The enzyme catalyses alpha-D-glucosamine 1-phosphate = D-glucosamine 6-phosphate. Functionally, catalyzes the conversion of glucosamine-6-phosphate to glucosamine-1-phosphate. The protein is Phosphoglucosamine mutase of Rhodopseudomonas palustris (strain TIE-1).